Here is a 394-residue protein sequence, read N- to C-terminus: Enoyl-[acyl-carrier-protein] reductase [NADH] (394 aa).

NAD(+) is bound by residues 48-53 (GASTGY), 74-75 (YE), 111-112 (DA), and 139-140 (LA). Tyr225 contacts substrate. Tyr235 acts as the Proton donor in catalysis. NAD(+) contacts are provided by residues Lys244 and 273–275 (LVT).

Belongs to the TER reductase family. Monomer.

It catalyses the reaction a 2,3-saturated acyl-[ACP] + NAD(+) = a (2E)-enoyl-[ACP] + NADH + H(+). The protein operates within lipid metabolism; fatty acid biosynthesis. Its function is as follows. Involved in the final reduction of the elongation cycle of fatty acid synthesis (FAS II). Catalyzes the reduction of a carbon-carbon double bond in an enoyl moiety that is covalently linked to an acyl carrier protein (ACP). This Opitutus terrae (strain DSM 11246 / JCM 15787 / PB90-1) protein is Enoyl-[acyl-carrier-protein] reductase [NADH].